The chain runs to 902 residues: Androgen receptor (902 aa).

Residues 1-540 (MEVQLGLGRV…PIDYYFPPQK (540 aa)) form a modulating region. Positions 1 to 569 (MEVQLGLGRV…GSCKVFFKRA (569 aa)) are interaction with ZNF318. Disordered stretches follow at residues 35–146 (QNPG…LSLL) and 194–224 (QQEV…YLGG). Ser61 is subject to Phosphoserine; by CDK9. A Phosphoserine modification is found at Ser75. Low complexity predominate over residues 94–103 (QPSQQQSASE). 2 stretches are compositionally biased toward polar residues: residues 196–205 (EVISEGSSSV) and 213–224 (APSSSKDSYLGG). Position 221 is a phosphotyrosine; by CSK (Tyr221). A Phosphoserine modification is found at Ser254. A Phosphotyrosine; by CSK and TNK2 modification is found at Tyr265. Ser290 carries the phosphoserine modification. Phosphotyrosine; by CSK is present on residues Tyr305, Tyr344, Tyr355, and Tyr360. Position 361 is a phosphotyrosine; by CSK and TNK2 (Tyr361). Lys384 participates in a covalent cross-link: Glycyl lysine isopeptide (Lys-Gly) (interchain with G-Cter in SUMO). Tyr391 bears the Phosphotyrosine; by CSK mark. The interval 439–465 (EGQLYGPGGGGGSSSPSDAGPVAPYGY) is disordered. Lys503 participates in a covalent cross-link: Glycyl lysine isopeptide (Lys-Gly) (interchain with G-Cter in SUMO). Phosphotyrosine; by CSK is present on residues Tyr517 and Tyr534. The interaction with LPXN stretch occupies residues 534 to 901 (YYFPPQKTCL…GKVKPIYFHT (368 aa)). A DNA-binding region (nuclear receptor) is located at residues 541-614 (TCLICGDEAS…AGMTLGARKL (74 aa)). 2 consecutive NR C4-type zinc fingers follow at residues 542–562 (CLIC…CGSC) and 578–602 (CASR…LRKC). The tract at residues 554-644 (YGALTCGSCK…TEDPSQKMTV (91 aa)) is interaction with HIPK3. The interaction with CCAR1 stretch occupies residues 574 to 901 (QKYLCASRND…GKVKPIYFHT (328 aa)). Positions 607–901 (MTLGARKLKK…GKVKPIYFHT (295 aa)) are interaction with KAT7. At Ser633 the chain carries Phosphoserine. Residues 651–882 (ECQPIFLNVL…DFPEMMAEII (232 aa)) form the NR LBD domain. Residues Asn688 and Arg735 each contribute to the 17beta-hydroxy-5alpha-androstan-3-one site. Residues Lys828 and Lys830 each participate in a glycyl lysine isopeptide (Lys-Gly) (interchain with G-Cter in ubiquitin) cross-link. 17beta-hydroxy-5alpha-androstan-3-one is bound at residue Thr860. Tyr898 is modified (phosphotyrosine; by CSK).

It belongs to the nuclear hormone receptor family. NR3 subfamily. In terms of assembly, binds DNA as a homodimer. Part of a ternary complex containing AR, EFCAB6/DJBP and PARK7. Interacts with HIPK3 and NR0B2 in the presence of androgen. The ligand binding domain interacts with KAT7/HBO1 in the presence of dihydrotestosterone. Interacts with EFCAB6/DJBP, PQBP1, RANBP9, RBAK, SPDEF, SRA1, TGFB1I1, ZNF318 and RREB1. Interacts with ZMIZ1/ZIMP10 and ZMIZ2/ZMIP7 which both enhance its transactivation activity. Interacts with SLC30A9 and RAD54L2/ARIP4. Interacts with MACROD1 (via macro domain). Interacts via the ligand-binding domain with LXXLL and FXXLF motifs from NCOA1, NCOA2, NCOA3 and MAGEA11. Interacts (via nuclear receptor DNA binding domain and nuclear receptor ligand binding domain) with NCOA4. The AR N-terminal poly-Gln region binds Ran resulting in enhancement of AR-mediated transactivation. Ran-binding decreases as the poly-Gln length increases. Interacts with HIP1 (via coiled coil domain). Interacts (via ligand-binding domain) with TRIM68. Interacts with TNK2. Interacts with USP26. Interacts with RNF6. Interacts (regulated by RNF6 probably through polyubiquitination) with RNF14; regulates AR transcriptional activity. Interacts with PRMT2 and TRIM24. Interacts with RACK1. Interacts with RANBP10; this interaction enhances dihydrotestosterone-induced AR transcriptional activity. Interacts with PRPF6 in a hormone-independent way; this interaction enhances dihydrotestosterone-induced AR transcriptional activity. Interacts with STK4/MST1. Interacts with ZIPK/DAPK3. Interacts with LPXN. Interacts with MAK. Part of a complex containing AR, MAK and NCOA3. Interacts with CRY1. Interacts with CCAR1 and GATA2. Interacts with BUD31. Interacts with ARID4A. Interacts with ARID4B. Interacts (via NR LBD domain) with ZBTB7A; the interaction is direct and androgen-dependent. Interacts with NCOR1. Interacts with NCOR2. Interacts with CRY2 in a ligand-dependent manner. In terms of processing, phosphorylated in prostate cancer cells in response to several growth factors including EGF. Phosphorylation is induced by c-Src kinase (CSK). Tyr-517 is one of the major phosphorylation sites and an increase in phosphorylation and Src kinase activity is associated with prostate cancer progression. Phosphorylation by TNK2 enhances the DNA-binding and transcriptional activity. Phosphorylation at Ser-61 by CDK9 regulates AR promoter selectivity and cell growth. Phosphorylation by PAK6 leads to AR-mediated transcription inhibition. Post-translationally, sumoylated on Lys-384 (major) and Lys-503. Ubiquitinated. Deubiquitinated by USP26. 'Lys-6' and 'Lys-27'-linked polyubiquitination by RNF6 modulates AR transcriptional activity and specificity. Palmitoylated by ZDHHC7 and ZDHHC21. Palmitoylation is required for plasma membrane targeting and for rapid intracellular signaling via ERK and AKT kinases and cAMP generation. As to expression, highest levels in the seminal vesicle, ventral prostate and coagulating gland with lower levels in the kidney and levator ani muscle.

It is found in the nucleus. The protein localises to the cytoplasm. Its function is as follows. Steroid hormone receptors are ligand-activated transcription factors that regulate eukaryotic gene expression and affect cellular proliferation and differentiation in target tissues. Transcription factor activity is modulated by bound coactivator and corepressor proteins like ZBTB7A that recruits NCOR1 and NCOR2 to the androgen response elements/ARE on target genes, negatively regulating androgen receptor signaling and androgen-induced cell proliferation. Transcription activation is also down-regulated by NR0B2. Activated, but not phosphorylated, by HIPK3 and ZIPK/DAPK3. The polypeptide is Androgen receptor (Ar) (Rattus norvegicus (Rat)).